Consider the following 345-residue polypeptide: 4-hydroxyproline 2-epimerase (345 aa).

Residue Gln85 coordinates substrate. The Proton acceptor role is filled by Ser93. Substrate is bound by residues 94–95 (GS) and Asp251. Cys255 serves as the catalytic Proton donor. 256-257 (GT) provides a ligand contact to substrate.

It belongs to the proline racemase family.

The enzyme catalyses trans-4-hydroxy-L-proline = cis-4-hydroxy-D-proline. In terms of biological role, catalyzes the epimerization of trans-4-hydroxy-L-proline (t4LHyp) to cis-4-hydroxy-D-proline (c4DHyp). May be involved in a degradation pathway of t4LHyp. Can also catalyze the epimerization of trans-3-hydroxy-L-proline (t3LHyp) to cis-3-hydroxy-D-proline (c3DHyp) in vitro, albeit with 2-fold lower efficiency. Displays no proline racemase activity. The polypeptide is 4-hydroxyproline 2-epimerase (Rhizobium etli (strain ATCC 51251 / DSM 11541 / JCM 21823 / NBRC 15573 / CFN 42)).